A 236-amino-acid chain; its full sequence is 7-cyano-7-deazaguanine synthase (236 aa).

13 to 23 (FSGGQDSTVCL) provides a ligand contact to ATP. Residues Cys-200, Cys-215, Cys-218, and Cys-221 each coordinate Zn(2+).

Belongs to the QueC family. The cofactor is Zn(2+).

The enzyme catalyses 7-carboxy-7-deazaguanine + NH4(+) + ATP = 7-cyano-7-deazaguanine + ADP + phosphate + H2O + H(+). It functions in the pathway purine metabolism; 7-cyano-7-deazaguanine biosynthesis. In terms of biological role, catalyzes the ATP-dependent conversion of 7-carboxy-7-deazaguanine (CDG) to 7-cyano-7-deazaguanine (preQ(0)). This chain is 7-cyano-7-deazaguanine synthase, found in Parvibaculum lavamentivorans (strain DS-1 / DSM 13023 / NCIMB 13966).